Reading from the N-terminus, the 343-residue chain is Methylthioribose-1-phosphate isomerase (343 aa).

Substrate is bound by residues 44–46 (RGA), Arg-85, and Gln-192. The active-site Proton donor is Asp-233. 243-244 (NK) serves as a coordination point for substrate.

Belongs to the eIF-2B alpha/beta/delta subunits family. MtnA subfamily.

The enzyme catalyses 5-(methylsulfanyl)-alpha-D-ribose 1-phosphate = 5-(methylsulfanyl)-D-ribulose 1-phosphate. Its pathway is amino-acid biosynthesis; L-methionine biosynthesis via salvage pathway; L-methionine from S-methyl-5-thio-alpha-D-ribose 1-phosphate: step 1/6. Its function is as follows. Catalyzes the interconversion of methylthioribose-1-phosphate (MTR-1-P) into methylthioribulose-1-phosphate (MTRu-1-P). This is Methylthioribose-1-phosphate isomerase from Carboxydothermus hydrogenoformans (strain ATCC BAA-161 / DSM 6008 / Z-2901).